The chain runs to 1454 residues: Coiled-coil domain-containing protein 18 (1454 aa).

S45 carries the post-translational modification Phosphoserine. Coiled-coil stretches lie at residues 107–138, 170–402, 438–464, and 508–1309; these read APVDQEIKSLREKLNKLRQQNACLVTQNHSLM, ILEE…ISQL, KLVISELRIKLAIKEAEIQKLHANLTA, and TMNK…SGHE. The tract at residues 828 to 851 is disordered; the sequence is QKQRESSAEKLRKMEEKCESAAHE. Position 1355 is a phosphoserine (S1355).

It is found in the cytoplasm. The protein localises to the cytoskeleton. It localises to the microtubule organizing center. Its subcellular location is the centrosome. The protein resides in the centriolar satellite. In Homo sapiens (Human), this protein is Coiled-coil domain-containing protein 18 (CCDC18).